Here is a 221-residue protein sequence, read N- to C-terminus: 2-C-methyl-D-erythritol 4-phosphate cytidylyltransferase (221 aa).

Belongs to the IspD/TarI cytidylyltransferase family. IspD subfamily.

It carries out the reaction 2-C-methyl-D-erythritol 4-phosphate + CTP + H(+) = 4-CDP-2-C-methyl-D-erythritol + diphosphate. It participates in isoprenoid biosynthesis; isopentenyl diphosphate biosynthesis via DXP pathway; isopentenyl diphosphate from 1-deoxy-D-xylulose 5-phosphate: step 2/6. Catalyzes the formation of 4-diphosphocytidyl-2-C-methyl-D-erythritol from CTP and 2-C-methyl-D-erythritol 4-phosphate (MEP). In Roseobacter denitrificans (strain ATCC 33942 / OCh 114) (Erythrobacter sp. (strain OCh 114)), this protein is 2-C-methyl-D-erythritol 4-phosphate cytidylyltransferase.